The sequence spans 631 residues: Phosphomethylpyrimidine synthase (631 aa).

Residues asparagine 239, methionine 268, tyrosine 297, histidine 333, 353–355, 394–397, and glutamate 433 each bind substrate; these read SRG and DGLR. Position 437 (histidine 437) interacts with Zn(2+). Position 460 (tyrosine 460) interacts with substrate. Position 501 (histidine 501) interacts with Zn(2+). Residues cysteine 581, cysteine 584, and cysteine 589 each contribute to the [4Fe-4S] cluster site.

It belongs to the ThiC family. In terms of assembly, homodimer. It depends on [4Fe-4S] cluster as a cofactor.

It carries out the reaction 5-amino-1-(5-phospho-beta-D-ribosyl)imidazole + S-adenosyl-L-methionine = 4-amino-2-methyl-5-(phosphooxymethyl)pyrimidine + CO + 5'-deoxyadenosine + formate + L-methionine + 3 H(+). Its pathway is cofactor biosynthesis; thiamine diphosphate biosynthesis. In terms of biological role, catalyzes the synthesis of the hydroxymethylpyrimidine phosphate (HMP-P) moiety of thiamine from aminoimidazole ribotide (AIR) in a radical S-adenosyl-L-methionine (SAM)-dependent reaction. In Shigella sonnei (strain Ss046), this protein is Phosphomethylpyrimidine synthase.